The primary structure comprises 249 residues: MLLIPAIDLKGGKCVRLRQGRMEDDTVFSDDPVAVALHWAEAGAKRLHLVDLDGAFAGQPVNADIIYHIAQALPDMDIQVGGGIRDSDTIQTYLDAGVRYAIIGTKAINAPHFVADACLEFPGHILLGLDAREGKIAINGWSKLSRHNLIDIAQRFEKDGVEAIIYTDIQRDGMMKGVNIEATSELAKAINIPVIASGGVSSLTEIEALCQHEQDGIGGAIIGRALYEEKIQLAEALAIAKRLSGESTA.

The active-site Proton acceptor is Asp-8. The active-site Proton donor is Asp-130.

It belongs to the HisA/HisF family.

It is found in the cytoplasm. The catalysed reaction is 1-(5-phospho-beta-D-ribosyl)-5-[(5-phospho-beta-D-ribosylamino)methylideneamino]imidazole-4-carboxamide = 5-[(5-phospho-1-deoxy-D-ribulos-1-ylimino)methylamino]-1-(5-phospho-beta-D-ribosyl)imidazole-4-carboxamide. The protein operates within amino-acid biosynthesis; L-histidine biosynthesis; L-histidine from 5-phospho-alpha-D-ribose 1-diphosphate: step 4/9. The polypeptide is 1-(5-phosphoribosyl)-5-[(5-phosphoribosylamino)methylideneamino] imidazole-4-carboxamide isomerase (Nitrosococcus oceani (strain ATCC 19707 / BCRC 17464 / JCM 30415 / NCIMB 11848 / C-107)).